The following is a 183-amino-acid chain: MGSSFVIDRSSSSPAPPRGPAPKLSAHARKIICKISPNRSFLFIISLHICEKYFISMGLRGHRSRFSRSVSTFFSPGKLACIAHLRVGCQIVPIFPYGAFLKTPYNRCAGNKVSESTHRRAVVRPSTRYFVTTFQDTETQLIIVSSVEVKKRKGIVILSIEFQSMHLKQRVDHQVDFLGNKIL.

The segment at 1–23 is disordered; that stretch reads MGSSFVIDRSSSSPAPPRGPAPK.

This is an uncharacterized protein from Saccharomyces cerevisiae (strain ATCC 204508 / S288c) (Baker's yeast).